A 281-amino-acid polypeptide reads, in one-letter code: Elongation factor 1-delta (281 aa).

Residue alanine 2 is modified to N-acetylalanine. Lysine 17 bears the N6-acetyllysine mark. Serine 37, serine 44, serine 60, serine 86, and serine 106 each carry phosphoserine. A leucine-zipper region spans residues leucine 80–leucine 115. Residue lysine 107 is modified to N6-acetyllysine. N6-acetyllysine; alternate is present on lysine 117. Lysine 117 is subject to N6-succinyllysine; alternate. The disordered stretch occupies residues serine 118–alanine 172. Phosphoserine is present on serine 119. Threonine 129 is subject to Phosphothreonine. Serine 133 carries the phosphoserine modification. Phosphothreonine is present on threonine 147. A compositionally biased stretch (acidic residues) spans alanine 149–lysine 169. Serine 162 is modified (phosphoserine; by CK2). A catalytic (GEF) region spans residues glutamine 173–isoleucine 281.

The protein belongs to the EF-1-beta/EF-1-delta family. In terms of assembly, EF-1 is composed of 4 subunits: alpha, beta, delta isoform 1, and gamma. Isoform 2 interacts with HSF1 and NFE2L2.

It localises to the nucleus. EF-1-beta and EF-1-delta stimulate the exchange of GDP bound to EF-1-alpha to GTP, regenerating EF-1-alpha for another round of transfer of aminoacyl-tRNAs to the ribosome. Its function is as follows. Regulates induction of heat-shock-responsive genes through association with heat shock transcription factors and direct DNA-binding at heat shock promoter elements (HSE). In Macaca fascicularis (Crab-eating macaque), this protein is Elongation factor 1-delta (EEF1D).